We begin with the raw amino-acid sequence, 381 residues long: Alcohol dehydrogenase class-3 (381 aa).

Position 49 (cysteine 49) interacts with Zn(2+). Histidine 50 serves as a coordination point for NAD(+). The an alcohol site is built by threonine 51 and histidine 71. Zn(2+) contacts are provided by histidine 71, glutamate 72, cysteine 101, cysteine 104, cysteine 107, cysteine 115, and cysteine 179. NAD(+) contacts are provided by residues 204 to 209 (GLGTVG), aspartate 228, lysine 233, isoleucine 274, 297 to 299 (VGV), 322 to 324 (TAF), and arginine 374.

Belongs to the zinc-containing alcohol dehydrogenase family. Class-III subfamily. As to quaternary structure, homodimer. Zn(2+) is required as a cofactor. In terms of tissue distribution, expressed at low levels in the leaves.

Its subcellular location is the cytoplasm. It catalyses the reaction a primary alcohol + NAD(+) = an aldehyde + NADH + H(+). It carries out the reaction a secondary alcohol + NAD(+) = a ketone + NADH + H(+). The catalysed reaction is S-(hydroxymethyl)glutathione + NADP(+) = S-formylglutathione + NADPH + H(+). The enzyme catalyses S-(hydroxymethyl)glutathione + NAD(+) = S-formylglutathione + NADH + H(+). This is Alcohol dehydrogenase class-3 (FDH) from Zea mays (Maize).